Consider the following 82-residue polypeptide: Small ribosomal subunit protein uS17 (82 aa).

This sequence belongs to the universal ribosomal protein uS17 family. In terms of assembly, part of the 30S ribosomal subunit.

Its function is as follows. One of the primary rRNA binding proteins, it binds specifically to the 5'-end of 16S ribosomal RNA. This chain is Small ribosomal subunit protein uS17, found in Shewanella amazonensis (strain ATCC BAA-1098 / SB2B).